The chain runs to 375 residues: Alpha-2,8-sialyltransferase 8B (375 aa).

The Cytoplasmic portion of the chain corresponds to 1–6 (MQLQFR). Residues 7-23 (SWMLAALTLLVVFLIFA) traverse the membrane as a helical; Signal-anchor for type II membrane protein segment. Topologically, residues 24–375 (DISEIEEEIG…LTVGQCDGAT (352 aa)) are lumenal. 4 N-linked (GlcNAc...) asparagine glycosylation sites follow: N60, N72, N89, and N134. 2 disulfide bridges follow: C157–C307 and C171–C371. 2 residues coordinate CMP-N-acetyl-beta-neuraminate: N162 and N185. 2 N-linked (GlcNAc...) asparagine glycosylation sites follow: N219 and N234. Residues T294, T295, G296, W316, Y329, and H330 each contribute to the CMP-N-acetyl-beta-neuraminate site. Catalysis depends on H346, which acts as the Proton donor/acceptor.

It belongs to the glycosyltransferase 29 family. In terms of processing, autopolysialylated. Autopolysialylation is not a prerequisite for the polysialylation acitity, but enhances the polysialylation acitity.

It is found in the golgi apparatus membrane. The protein localises to the secreted. Its subcellular location is the cell membrane. The catalysed reaction is [N-acetyl-alpha-D-neuraminosyl-(2-&gt;8)](n) + CMP-N-acetyl-beta-neuraminate = [N-acetyl-alpha-D-neuraminosyl-(2-&gt;8)](n+1) + CMP + H(+). It participates in protein modification; protein glycosylation. Functionally, catalyzes the transfer of a sialic acid from a CMP-linked sialic acid donor onto a terminal alpha-2,3-, alpha-2,6-, or alpha-2,8-linked sialic acid of an N-linked glycan acceptor through alpha-2,8-linkages. Therefore, participates in polysialic acid synthesis on various sialylated N-acetyllactosaminyl oligosaccharides (alpha-2,3-, alpha-2,6-, or alpha-2,8-linked sialic acid), including NCAM1, NCAM1 N-glycans, FETUB N-glycans, and to a lesser extent sialylparagloboside (SPG) and AHSG, which does not require the initial addition of an alpha 2,8-sialic acid. However, does not exhibit sialic acid-polymerase activity. Catalyzes polysialic acid synthesis in the hippocampal on NCAM1 and supports neurite outgrowth. ST8SIA2-mediated polysialylation influences on oligodendrocyte differentiation and may promote the integrity of myelin and axons. The sequence is that of Alpha-2,8-sialyltransferase 8B from Pan troglodytes (Chimpanzee).